Reading from the N-terminus, the 99-residue chain is U2-theraphotoxin-Lsp1a (99 aa).

Residues 1–22 form the signal peptide; sequence MNTIQVIIFAVVLVLTVTVGQA. A propeptide spanning residues 23–57 is cleaved from the precursor; the sequence is DEDSPEASLLRKLKEAEASLFGQNLEESRNSRQKR. Cystine bridges form between cysteine 58–cysteine 73, cysteine 65–cysteine 78, and cysteine 72–cysteine 93.

Belongs to the neurotoxin 14 (magi-1) family. 08 (Ltx-4) subfamily. As to expression, expressed by the venom gland.

It localises to the secreted. Its function is as follows. Insecticidal neurotoxin. The protein is U2-theraphotoxin-Lsp1a of Lasiodora sp. (strain IBSP 8539) (Brazilian salmon pink birdeater).